Here is a 122-residue protein sequence, read N- to C-terminus: Large ribosomal subunit protein bL12 (122 aa).

The protein belongs to the bacterial ribosomal protein bL12 family. Homodimer. Part of the ribosomal stalk of the 50S ribosomal subunit. Forms a multimeric L10(L12)X complex, where L10 forms an elongated spine to which 2 to 4 L12 dimers bind in a sequential fashion. Binds GTP-bound translation factors.

Its function is as follows. Forms part of the ribosomal stalk which helps the ribosome interact with GTP-bound translation factors. Is thus essential for accurate translation. The sequence is that of Large ribosomal subunit protein bL12 from Buchnera aphidicola subsp. Baizongia pistaciae (strain Bp).